The following is a 147-amino-acid chain: MASILVLHGPNLNLLGTREPEIYGAETLDDINFRLTETARQAGHHLLTLQSNAEYELIDRIHEAKKEGVDFIIINPAAFTHTSVALRDALLGVGIPFIETHLSNVHAREAFRHHSYFSDVAVGVICGFGSQSYELALQAAFSKITGK.

Residue tyrosine 23 is the Proton acceptor of the active site. Substrate-binding residues include asparagine 75, histidine 81, and aspartate 88. Residue histidine 101 is the Proton donor of the active site. Substrate-binding positions include 102–103 and arginine 112; that span reads LS.

Belongs to the type-II 3-dehydroquinase family. In terms of assembly, homododecamer.

The catalysed reaction is 3-dehydroquinate = 3-dehydroshikimate + H2O. The protein operates within metabolic intermediate biosynthesis; chorismate biosynthesis; chorismate from D-erythrose 4-phosphate and phosphoenolpyruvate: step 3/7. In terms of biological role, catalyzes a trans-dehydration via an enolate intermediate. This chain is 3-dehydroquinate dehydratase, found in Hahella chejuensis (strain KCTC 2396).